Reading from the N-terminus, the 148-residue chain is CASP-like protein 1 (148 aa).

Helical transmembrane passes span 31–51 (FIYF…TSLL), 74–94 (VLLL…GYIG), and 121–141 (IAAG…SFFT).

Belongs to the Casparian strip membrane proteins (CASP) family. As to quaternary structure, homodimer and heterodimers.

It is found in the cell membrane. In Panax ginseng (Korean ginseng), this protein is CASP-like protein 1.